Reading from the N-terminus, the 116-residue chain is MVNHFRIDRVGMEIKREVNEILQKKVRDPRVQGVTITDVQMLGDLSVAKVYYTILSNLASDNQKAQIGLEKATGTIKRELGRNLKLYKIPDLTFVKDESIEYGNKIDEMLRNLDKN.

The protein belongs to the RbfA family. As to quaternary structure, monomer. Binds 30S ribosomal subunits, but not 50S ribosomal subunits or 70S ribosomes.

It localises to the cytoplasm. In terms of biological role, one of several proteins that assist in the late maturation steps of the functional core of the 30S ribosomal subunit. Associates with free 30S ribosomal subunits (but not with 30S subunits that are part of 70S ribosomes or polysomes). Required for efficient processing of 16S rRNA. May interact with the 5'-terminal helix region of 16S rRNA. The protein is Ribosome-binding factor A of Streptococcus pneumoniae (strain ATCC BAA-255 / R6).